Here is a 320-residue protein sequence, read N- to C-terminus: ATP-dependent 6-phosphofructokinase (320 aa).

Gly12 is an ATP binding site. ADP contacts are provided by residues 22–26 and 55–60; these read RGVVR and RYSVSD. ATP is bound by residues 73–74 and 103–106; these read RF and GDGS. Asp104 lines the Mg(2+) pocket. 126–128 serves as a coordination point for substrate; the sequence is TID. The active-site Proton acceptor is the Asp128. Arg155 is a binding site for ADP. Substrate is bound by residues Arg163 and 170–172; that span reads MGR. Residues 186 to 188, Lys212, and 214 to 216 contribute to the ADP site; these read GCE and KKH. Substrate-binding positions include Glu223, Arg244, and 250–253; that span reads HIQR.

Belongs to the phosphofructokinase type A (PFKA) family. ATP-dependent PFK group I subfamily. Prokaryotic clade 'B1' sub-subfamily. In terms of assembly, homotetramer. The cofactor is Mg(2+).

The protein localises to the cytoplasm. The catalysed reaction is beta-D-fructose 6-phosphate + ATP = beta-D-fructose 1,6-bisphosphate + ADP + H(+). It functions in the pathway carbohydrate degradation; glycolysis; D-glyceraldehyde 3-phosphate and glycerone phosphate from D-glucose: step 3/4. With respect to regulation, allosterically activated by ADP and other diphosphonucleosides, and allosterically inhibited by phosphoenolpyruvate. In terms of biological role, catalyzes the phosphorylation of D-fructose 6-phosphate to fructose 1,6-bisphosphate by ATP, the first committing step of glycolysis. The sequence is that of ATP-dependent 6-phosphofructokinase from Erwinia tasmaniensis (strain DSM 17950 / CFBP 7177 / CIP 109463 / NCPPB 4357 / Et1/99).